Consider the following 151-residue polypeptide: Small ribosomal subunit protein uS15 (151 aa).

Positions 1–20 (MARLHSGKRGSSGSTRPLRT) are disordered.

It belongs to the universal ribosomal protein uS15 family. As to quaternary structure, part of the 30S ribosomal subunit.

This chain is Small ribosomal subunit protein uS15, found in Methanococcus maripaludis (strain C5 / ATCC BAA-1333).